A 396-amino-acid polypeptide reads, in one-letter code: MKILVMNCGSSSLKYQLINMENEEVLAIGLAERIGIAGARVKHEASGKEKVTIEQPMENHKTAIKIVLEALIDENYGAIKSMDEIAAVGHRVVHGGERFSSSVVVTDDVKNALEECSDLAPLHNPPNLMGIEACQEILPNVPMVGVFDTAFHQTMPESSYMYALPYELYEKHKIRRYGFHGTSHKYVAMKAAEILERPIEDLKIIACHLGNGASITAVDGGISVDTSMGFTPLEGLVMGTRCGDMDPAIVTFLMEKEKIDHNQVNAIMNKQSGVYGLSGVSSDFRDIEVAVKEGNKRAQLALDVYYKRVKKYIGAYAAEMGGVDAVVFTAGLGENSPETRKSICEGLEFLGIKIDNTKNNVRGKETVVSTDDTPTKVLLIPTNEELAIARETKSLI.

A Mg(2+)-binding site is contributed by Asn-7. Lys-14 contacts ATP. Arg-91 provides a ligand contact to substrate. Asp-148 serves as the catalytic Proton donor/acceptor. Residues 208-212 (HLGNG), 283-285 (DFR), and 331-335 (GLGEN) contribute to the ATP site. Position 384 (Glu-384) interacts with Mg(2+).

The protein belongs to the acetokinase family. As to quaternary structure, homodimer. Requires Mg(2+) as cofactor. The cofactor is Mn(2+).

Its subcellular location is the cytoplasm. It carries out the reaction acetate + ATP = acetyl phosphate + ADP. It participates in metabolic intermediate biosynthesis; acetyl-CoA biosynthesis; acetyl-CoA from acetate: step 1/2. Catalyzes the formation of acetyl phosphate from acetate and ATP. Can also catalyze the reverse reaction. In Alkaliphilus metalliredigens (strain QYMF), this protein is Acetate kinase.